The primary structure comprises 444 residues: MIDIKLLRLNSEIFYKSCRDRGFDTRILDEFFELDNEWKENLKQLNNIKHDKNSITMEISRRIKSGDDINDLKLKVESLNIDIQRLEGRQNEIDVKRNEILRLIPNLLADDVPRCFGDENNRLVRYYGRARVFSDDVKYFIENSGSGDYEEIDYRPKSHVDLISELNLADIERAGKIAGARFYFLKNRLFKLELALINYAVDFLSQRGYTVLEPPFMINYKSMSGATDIETFKDTLYKIEGDDLYLIATAEHPIASMLQDEILMEDELPIRVSGVSPCFRREAGAHGKDTKGIFRVHQFNKIEQFVFCKPEDSWDFFDELVRNSEDIYKSLKIPYRVVNVCSGELGNLAAKKYDIEAWFPAQGKFREIVSASNDTDYQARSLNIKYRSRDGNRFVHTLNSTAIATERILVAIMENFQDRNGKVIKIPEVLIPYTGFSEIGGDDN.

249–251 (TAE) is a binding site for L-serine. ATP is bound by residues 280 to 282 (RRE) and Val-296. Glu-303 lines the L-serine pocket. Residue 367-370 (EIVS) participates in ATP binding. Thr-401 is a binding site for L-serine.

Belongs to the class-II aminoacyl-tRNA synthetase family. Type-1 seryl-tRNA synthetase subfamily. Homodimer. The tRNA molecule binds across the dimer.

It is found in the cytoplasm. The enzyme catalyses tRNA(Ser) + L-serine + ATP = L-seryl-tRNA(Ser) + AMP + diphosphate + H(+). It carries out the reaction tRNA(Sec) + L-serine + ATP = L-seryl-tRNA(Sec) + AMP + diphosphate + H(+). Its pathway is aminoacyl-tRNA biosynthesis; selenocysteinyl-tRNA(Sec) biosynthesis; L-seryl-tRNA(Sec) from L-serine and tRNA(Sec): step 1/1. Functionally, catalyzes the attachment of serine to tRNA(Ser). Is also able to aminoacylate tRNA(Sec) with serine, to form the misacylated tRNA L-seryl-tRNA(Sec), which will be further converted into selenocysteinyl-tRNA(Sec). This chain is Serine--tRNA ligase, found in Picrophilus torridus (strain ATCC 700027 / DSM 9790 / JCM 10055 / NBRC 100828 / KAW 2/3).